A 239-amino-acid polypeptide reads, in one-letter code: 2-C-methyl-D-erythritol 4-phosphate cytidylyltransferase (239 aa).

This sequence belongs to the IspD/TarI cytidylyltransferase family. IspD subfamily.

The enzyme catalyses 2-C-methyl-D-erythritol 4-phosphate + CTP + H(+) = 4-CDP-2-C-methyl-D-erythritol + diphosphate. It participates in isoprenoid biosynthesis; isopentenyl diphosphate biosynthesis via DXP pathway; isopentenyl diphosphate from 1-deoxy-D-xylulose 5-phosphate: step 2/6. Functionally, catalyzes the formation of 4-diphosphocytidyl-2-C-methyl-D-erythritol from CTP and 2-C-methyl-D-erythritol 4-phosphate (MEP). This is 2-C-methyl-D-erythritol 4-phosphate cytidylyltransferase from Ruthia magnifica subsp. Calyptogena magnifica.